The sequence spans 375 residues: Alcohol dehydrogenase 1 (375 aa).

Position 2 is an N-acetylserine (S2). Positions 47, 68, 98, 101, 104, 112, and 175 each coordinate Zn(2+). Residues 200–205 (GLGGVG), D224, and K229 each bind NAD(+). K234 carries the post-translational modification N6-succinyllysine. An NAD(+)-binding site is contributed by 293 to 295 (VGV). K340 is modified (N6-succinyllysine). R370 is a binding site for NAD(+).

It belongs to the zinc-containing alcohol dehydrogenase family. Class-I subfamily. In terms of assembly, dimer of identical or non-identical chains of three types (A, B, C), which are coded by 3 separate genes at different loci. The cofactor is Zn(2+). In terms of tissue distribution, expressed at high levels in the liver, small intestine and eye, at moderate levels in kidney, ovary and uterus, and at low levels in the spinal cord, thymus, heart, stomach mucosa, skin and testis.

It localises to the cytoplasm. It catalyses the reaction a primary alcohol + NAD(+) = an aldehyde + NADH + H(+). It carries out the reaction a secondary alcohol + NAD(+) = a ketone + NADH + H(+). This is Alcohol dehydrogenase 1 (Adh1) from Mus musculus (Mouse).